The sequence spans 358 residues: Glutamate 5-kinase (358 aa).

Residue lysine 9 participates in ATP binding. Residues serine 49, aspartate 136, and asparagine 148 each coordinate substrate. Residues 168 to 169 (TD) and 210 to 216 (TGGMTTK) each bind ATP. The PUA domain occupies 275–353 (DAAVEVDAGA…RAEGVLIHRN (79 aa)).

The protein belongs to the glutamate 5-kinase family.

Its subcellular location is the cytoplasm. It catalyses the reaction L-glutamate + ATP = L-glutamyl 5-phosphate + ADP. Its pathway is amino-acid biosynthesis; L-proline biosynthesis; L-glutamate 5-semialdehyde from L-glutamate: step 1/2. Functionally, catalyzes the transfer of a phosphate group to glutamate to form L-glutamate 5-phosphate. The polypeptide is Glutamate 5-kinase (Streptococcus suis (strain 05ZYH33)).